A 115-amino-acid chain; its full sequence is MPRATNSVASRARRKRILKKAKGYWGSRGTILTVAKHAVDKAEQYAYRDRRVKKRTFRSLWIMRINAAARENGTSYSRLMEAMNKKSIDINRKALAEIAVKDPAAFSQIVKSAMG.

This sequence belongs to the bacterial ribosomal protein bL20 family.

Functionally, binds directly to 23S ribosomal RNA and is necessary for the in vitro assembly process of the 50S ribosomal subunit. It is not involved in the protein synthesizing functions of that subunit. The protein is Large ribosomal subunit protein bL20 of Chlorobium phaeobacteroides (strain BS1).